Reading from the N-terminus, the 443-residue chain is Adenylate cyclase (443 aa).

The next 6 membrane-spanning stretches (helical) occupy residues 47–69, 74–93, 98–120, 124–143, 148–167, and 180–202; these read VLTI…QLAT, WYIA…VPLL, GLVA…GWDV, AGAQ…LVGI, LAVG…EFLV, and SVSF…WFAL. Residues 203 to 443 are Cytoplasmic-facing; the sequence is RDTARAEAVM…RGAEPRTAGV (241 aa). A Guanylate cyclase domain is found at 251 to 378; sequence SVLFADIVGF…DAVNVASRME (128 aa). Aspartate 256 and aspartate 300 together coordinate Mg(2+).

Belongs to the adenylyl cyclase class-4/guanylyl cyclase family. As to quaternary structure, homodimer. Can also exist as monomer. Mg(2+) serves as cofactor. It depends on Mn(2+) as a cofactor.

The protein resides in the cell membrane. The enzyme catalyses ATP = 3',5'-cyclic AMP + diphosphate. The polypeptide is Adenylate cyclase (cya) (Mycobacterium bovis (strain ATCC BAA-935 / AF2122/97)).